Consider the following 169-residue polypeptide: Non-specific lipid transfer protein GPI-anchored 11 (169 aa).

Residues 1–23 form the signal peptide; that stretch reads MAYATILMIFSVVALMSGERAHA. Intrachain disulfides connect Cys-27/Cys-70, Cys-37/Cys-54, Cys-55/Cys-95, and Cys-68/Cys-105. Ser-146 carries the GPI-anchor amidated serine lipid modification. Residues 147–169 constitute a propeptide, removed in mature form; it reads SDASLLSVSFAFVIFMALISSFY.

This sequence belongs to the plant LTP family. In terms of tissue distribution, expressed in a vascular-specific manner, mainly in roots, and, to a lower extent, in hypocotyls, seedlings stems and flowers.

It localises to the cell membrane. It is found in the secreted. In terms of biological role, probable lipid transfer protein. Proteoglycan-like factor that exhibits xylogen activity consisting in mediating local and inductive cell-cell interactions required for xylem differentiation. This is Non-specific lipid transfer protein GPI-anchored 11 from Arabidopsis thaliana (Mouse-ear cress).